The sequence spans 222 residues: GTP cyclohydrolase 1 (222 aa).

Zn(2+)-binding residues include Cys-111, His-114, and Cys-182.

It belongs to the GTP cyclohydrolase I family. Toroid-shaped homodecamer, composed of two pentamers of five dimers.

It catalyses the reaction GTP + H2O = 7,8-dihydroneopterin 3'-triphosphate + formate + H(+). It participates in cofactor biosynthesis; 7,8-dihydroneopterin triphosphate biosynthesis; 7,8-dihydroneopterin triphosphate from GTP: step 1/1. With respect to regulation, allosteric enzyme. Activity is modulated by K(+), divalent cations, UTP, and tetrahydrobiopterin. Tetrahydrobiopterin is an inhibitor of this enzyme. This Salmonella typhi protein is GTP cyclohydrolase 1.